The following is a 485-amino-acid chain: Alginate biosynthesis protein AlgA (485 aa).

The protein belongs to the mannose-6-phosphate isomerase type 2 family. Monomer. The cofactor is Co(2+).

It carries out the reaction D-mannose 6-phosphate = D-fructose 6-phosphate. The catalysed reaction is alpha-D-mannose 1-phosphate + GTP + H(+) = GDP-alpha-D-mannose + diphosphate. It participates in nucleotide-sugar biosynthesis; GDP-alpha-D-mannose biosynthesis; GDP-alpha-D-mannose from alpha-D-mannose 1-phosphate (GTP route): step 1/1. Its pathway is nucleotide-sugar biosynthesis; GDP-alpha-D-mannose biosynthesis; alpha-D-mannose 1-phosphate from D-fructose 6-phosphate: step 1/2. In terms of biological role, produces a precursor for alginate polymerization. The alginate layer provides a protective barrier against host immune defenses and antibiotics. The polypeptide is Alginate biosynthesis protein AlgA (algA) (Pseudomonas putida (strain ATCC 47054 / DSM 6125 / CFBP 8728 / NCIMB 11950 / KT2440)).